A 342-amino-acid polypeptide reads, in one-letter code: GTPase Obg (342 aa).

An Obg domain is found at 1 to 159 (MQFIDQAQIE…KLLRLELKLL (159 aa)). Residues 160-330 (AEVGIIGLPN…MLQEVWGILD (171 aa)) enclose the OBG-type G domain. GTP contacts are provided by residues 166-173 (GLPNAGKS), 191-195 (FTTLI), 213-216 (DIPG), 280-283 (NKID), and 311-313 (SAV). 2 residues coordinate Mg(2+): S173 and T193.

It belongs to the TRAFAC class OBG-HflX-like GTPase superfamily. OBG GTPase family. As to quaternary structure, monomer. The cofactor is Mg(2+).

It localises to the cytoplasm. In terms of biological role, an essential GTPase which binds GTP, GDP and possibly (p)ppGpp with moderate affinity, with high nucleotide exchange rates and a fairly low GTP hydrolysis rate. Plays a role in control of the cell cycle, stress response, ribosome biogenesis and in those bacteria that undergo differentiation, in morphogenesis control. This is GTPase Obg from Trichormus variabilis (strain ATCC 29413 / PCC 7937) (Anabaena variabilis).